The primary structure comprises 885 residues: Alanine--tRNA ligase (885 aa).

Zn(2+) is bound by residues H564, H568, C676, and H680.

It belongs to the class-II aminoacyl-tRNA synthetase family. Zn(2+) serves as cofactor.

It is found in the cytoplasm. The enzyme catalyses tRNA(Ala) + L-alanine + ATP = L-alanyl-tRNA(Ala) + AMP + diphosphate. Functionally, catalyzes the attachment of alanine to tRNA(Ala) in a two-step reaction: alanine is first activated by ATP to form Ala-AMP and then transferred to the acceptor end of tRNA(Ala). Also edits incorrectly charged Ser-tRNA(Ala) and Gly-tRNA(Ala) via its editing domain. The sequence is that of Alanine--tRNA ligase from Brucella anthropi (strain ATCC 49188 / DSM 6882 / CCUG 24695 / JCM 21032 / LMG 3331 / NBRC 15819 / NCTC 12168 / Alc 37) (Ochrobactrum anthropi).